Here is a 434-residue protein sequence, read N- to C-terminus: Putative peptidase B (434 aa).

2 residues coordinate Mn(2+): lysine 198 and aspartate 203. Residue lysine 210 is part of the active site. Mn(2+)-binding residues include aspartate 221, aspartate 280, and glutamate 282. Arginine 284 is a catalytic residue.

It belongs to the peptidase M17 family. In terms of assembly, homohexamer. It depends on Mn(2+) as a cofactor.

The protein localises to the cytoplasm. It catalyses the reaction Release of an N-terminal amino acid, Xaa, from a peptide or arylamide. Xaa is preferably Glu or Asp but may be other amino acids, including Leu, Met, His, Cys and Gln.. Functionally, probably plays an important role in intracellular peptide degradation. The polypeptide is Putative peptidase B (Haemophilus influenzae (strain ATCC 51907 / DSM 11121 / KW20 / Rd)).